Here is a 303-residue protein sequence, read N- to C-terminus: Proteasome subunit beta (303 aa).

Residues 1–67 (MTWQFPDRLS…SGGTGQLPHG (67 aa)) constitute a propeptide, removed in mature form; by autocatalysis. T68 (nucleophile) is an active-site residue.

This sequence belongs to the peptidase T1B family. In terms of assembly, the 20S proteasome core is composed of 14 alpha and 14 beta subunits that assemble into four stacked heptameric rings, resulting in a barrel-shaped structure. The two inner rings, each composed of seven catalytic beta subunits, are sandwiched by two outer rings, each composed of seven alpha subunits. The catalytic chamber with the active sites is on the inside of the barrel. Has a gated structure, the ends of the cylinder being occluded by the N-termini of the alpha-subunits. Is capped by the proteasome-associated ATPase, ARC.

Its subcellular location is the cytoplasm. It catalyses the reaction Cleavage of peptide bonds with very broad specificity.. It functions in the pathway protein degradation; proteasomal Pup-dependent pathway. With respect to regulation, the formation of the proteasomal ATPase ARC-20S proteasome complex, likely via the docking of the C-termini of ARC into the intersubunit pockets in the alpha-rings, may trigger opening of the gate for substrate entry. Interconversion between the open-gate and close-gate conformations leads to a dynamic regulation of the 20S proteasome proteolysis activity. Its function is as follows. Component of the proteasome core, a large protease complex with broad specificity involved in protein degradation. The sequence is that of Proteasome subunit beta from Mycolicibacterium paratuberculosis (strain ATCC BAA-968 / K-10) (Mycobacterium paratuberculosis).